A 106-amino-acid polypeptide reads, in one-letter code: UPF0145 protein Tpet_0165 (106 aa).

Belongs to the UPF0145 family.

This Thermotoga petrophila (strain ATCC BAA-488 / DSM 13995 / JCM 10881 / RKU-1) protein is UPF0145 protein Tpet_0165.